The following is a 431-amino-acid chain: UPF0597 protein LCA_0156 (431 aa).

This sequence belongs to the UPF0597 family.

This is UPF0597 protein LCA_0156 from Latilactobacillus sakei subsp. sakei (strain 23K) (Lactobacillus sakei subsp. sakei).